A 124-amino-acid polypeptide reads, in one-letter code: Small ribosomal subunit protein uS12 (124 aa).

D89 carries the post-translational modification 3-methylthioaspartic acid.

The protein belongs to the universal ribosomal protein uS12 family. As to quaternary structure, part of the 30S ribosomal subunit. Contacts proteins S8 and S17. May interact with IF1 in the 30S initiation complex.

With S4 and S5 plays an important role in translational accuracy. In terms of biological role, interacts with and stabilizes bases of the 16S rRNA that are involved in tRNA selection in the A site and with the mRNA backbone. Located at the interface of the 30S and 50S subunits, it traverses the body of the 30S subunit contacting proteins on the other side and probably holding the rRNA structure together. The combined cluster of proteins S8, S12 and S17 appears to hold together the shoulder and platform of the 30S subunit. The sequence is that of Small ribosomal subunit protein uS12 from Shewanella frigidimarina (strain NCIMB 400).